Here is a 410-residue protein sequence, read N- to C-terminus: Testis-specific Y-encoded-like protein 6 (410 aa).

Disordered stretches follow at residues 1–31 (MSLP…EKSK) and 46–69 (PIVF…DGGH). A Phosphoserine modification is found at S9. Residues 18 to 31 (EDPHQGQRSREKSK) are compositionally biased toward basic and acidic residues.

The protein belongs to the nucleosome assembly protein (NAP) family.

This is Testis-specific Y-encoded-like protein 6 (TSPYL6) from Homo sapiens (Human).